The sequence spans 93 residues: UPF0358 protein lin1058 (93 aa).

Belongs to the UPF0358 family.

The polypeptide is UPF0358 protein lin1058 (Listeria innocua serovar 6a (strain ATCC BAA-680 / CLIP 11262)).